A 185-amino-acid polypeptide reads, in one-letter code: Protein PBP4 (185 aa).

Composition is skewed to low complexity over residues 1–24 (MTTT…LSAS) and 46–62 (AQAA…QQQQ). 2 disordered regions span residues 1 to 116 (MTTT…YNRE) and 147 to 168 (ETAS…SKNK). Polar residues-rich tracts occupy residues 73 to 83 (PANTKTKTIAS), 91 to 102 (KGSSTANGSSTN), and 147 to 166 (ETAS…SSSK).

In terms of assembly, interacts with IGO1, LSM12 and PBP1.

Its subcellular location is the cytoplasm. The protein localises to the nucleus. The polypeptide is Protein PBP4 (PBP4) (Saccharomyces cerevisiae (strain ATCC 204508 / S288c) (Baker's yeast)).